We begin with the raw amino-acid sequence, 712 residues long: Probable serine/threonine-protein kinase fhkE (712 aa).

The FHA domain maps to Ile-46–Val-100. Residues Tyr-145–Phe-411 form the Protein kinase domain. Residues Leu-151–Val-159 and Lys-174 contribute to the ATP site. The active-site Proton acceptor is Asp-270. A coiled-coil region spans residues Asn-414–Thr-442. A disordered region spans residues Ala-431–Arg-695. Low complexity-rich tracts occupy residues Glu-436 to Asn-446, Gly-459 to Asn-481, Asn-514 to Thr-571, Asn-595 to Ile-605, and Asn-616 to Asn-639. The span at Pro-669–Gly-678 shows a compositional bias: polar residues.

It belongs to the protein kinase superfamily. CAMK Ser/Thr protein kinase family. CHK2 subfamily.

The enzyme catalyses L-seryl-[protein] + ATP = O-phospho-L-seryl-[protein] + ADP + H(+). The catalysed reaction is L-threonyl-[protein] + ATP = O-phospho-L-threonyl-[protein] + ADP + H(+). The sequence is that of Probable serine/threonine-protein kinase fhkE (fhkE) from Dictyostelium discoideum (Social amoeba).